Here is a 164-residue protein sequence, read N- to C-terminus: Large ribosomal subunit protein uL10 (164 aa).

The protein belongs to the universal ribosomal protein uL10 family. As to quaternary structure, part of the ribosomal stalk of the 50S ribosomal subunit. The N-terminus interacts with L11 and the large rRNA to form the base of the stalk. The C-terminus forms an elongated spine to which L12 dimers bind in a sequential fashion forming a multimeric L10(L12)X complex.

In terms of biological role, forms part of the ribosomal stalk, playing a central role in the interaction of the ribosome with GTP-bound translation factors. The polypeptide is Large ribosomal subunit protein uL10 (Helicobacter pylori (strain G27)).